The primary structure comprises 1002 residues: SIT4-associating protein SAP155 (1002 aa).

Disordered regions lie at residues 51-131 (GTSD…APMM), 214-273 (QQQL…ANED), 609-645 (EQLK…ESDY), 868-901 (DNTT…GGGQ), and 940-1002 (NTEN…YDHE). Serine 58 carries the phosphoserine modification. Residues 62–97 (EYSHGDEVKTARGDQKSRFEKDDQQERYEKEEEERS) are compositionally biased toward basic and acidic residues. A compositionally biased stretch (low complexity) spans 98–114 (MNSSESSTTSFSSGSTS). Residues 220–241 (SSQEDVYVESDTEQEEEKEDDN) show a composition bias toward acidic residues. Serine 255 carries the post-translational modification Phosphoserine. Positions 262-273 (NNNDDDDDANED) are enriched in acidic residues. Residues 609 to 626 (EQLKTKHSPTRDTDHDLK) show a composition bias toward basic and acidic residues. Phosphothreonine occurs at positions 613 and 618. Acidic residues predominate over residues 635 to 645 (DNNDNDDESDY). Polar residues predominate over residues 868–885 (DNTTVLTPNGDASNNNEI). Residues 956 to 976 (SNSNINNTNHNSNNSNNNDNN) are compositionally biased toward low complexity. Residues 991–1002 (EDADNDNDYDHE) are compositionally biased toward acidic residues.

It belongs to the SAPS family. As to quaternary structure, associates with the SIT4 protein phosphatase catalytic subunit in a cell-cycle-dependent manner. Hyperphosphorylated in the absence of SIT4.

Its subcellular location is the cytoplasm. Its function is as follows. Positive regulator of protein phosphatase SIT4. Involved in directing expression of TOR-repressed genes and in dephosphorylation of NPR1 in response to nutrient starvation. Negatively modulates K(+) efflux of the cell by the Na(+)-K(+)/H(+) antiporter NHA1. The sequence is that of SIT4-associating protein SAP155 (SAP155) from Saccharomyces cerevisiae (strain ATCC 204508 / S288c) (Baker's yeast).